A 371-amino-acid chain; its full sequence is Aspartate-semialdehyde dehydrogenase (371 aa).

Residues 10-13 (RGMV), 37-38 (TS), and Gln74 each bind NADP(+). Arg103 lines the phosphate pocket. The active-site Acyl-thioester intermediate is Cys136. Gln163 contributes to the substrate binding site. Residue Ser166 coordinates NADP(+). Glu243 serves as a coordination point for substrate. Residue Lys246 participates in phosphate binding. Arg270 is a substrate binding site. Catalysis depends on His277, which acts as the Proton acceptor. Residue Gln353 coordinates NADP(+).

It belongs to the aspartate-semialdehyde dehydrogenase family. As to quaternary structure, homodimer.

The catalysed reaction is L-aspartate 4-semialdehyde + phosphate + NADP(+) = 4-phospho-L-aspartate + NADPH + H(+). It functions in the pathway amino-acid biosynthesis; L-lysine biosynthesis via DAP pathway; (S)-tetrahydrodipicolinate from L-aspartate: step 2/4. The protein operates within amino-acid biosynthesis; L-methionine biosynthesis via de novo pathway; L-homoserine from L-aspartate: step 2/3. Its pathway is amino-acid biosynthesis; L-threonine biosynthesis; L-threonine from L-aspartate: step 2/5. Its function is as follows. Catalyzes the NADPH-dependent formation of L-aspartate-semialdehyde (L-ASA) by the reductive dephosphorylation of L-aspartyl-4-phosphate. In Haemophilus influenzae (strain ATCC 51907 / DSM 11121 / KW20 / Rd), this protein is Aspartate-semialdehyde dehydrogenase.